A 289-amino-acid polypeptide reads, in one-letter code: Ribosomal RNA small subunit methyltransferase A (289 aa).

The S-adenosyl-L-methionine site is built by Asn-21, Leu-23, Gly-48, Glu-69, Asp-94, and Asn-120.

It belongs to the class I-like SAM-binding methyltransferase superfamily. rRNA adenine N(6)-methyltransferase family. RsmA subfamily.

It is found in the cytoplasm. The catalysed reaction is adenosine(1518)/adenosine(1519) in 16S rRNA + 4 S-adenosyl-L-methionine = N(6)-dimethyladenosine(1518)/N(6)-dimethyladenosine(1519) in 16S rRNA + 4 S-adenosyl-L-homocysteine + 4 H(+). Functionally, specifically dimethylates two adjacent adenosines (A1518 and A1519) in the loop of a conserved hairpin near the 3'-end of 16S rRNA in the 30S particle. May play a critical role in biogenesis of 30S subunits. The polypeptide is Ribosomal RNA small subunit methyltransferase A (Actinobacillus pleuropneumoniae serotype 3 (strain JL03)).